The sequence spans 294 residues: Polyketide transferase grgF (294 aa).

Residues C115, D240, and H269 contribute to the active site.

It belongs to the polyketide transferase af380 family. As to quaternary structure, homodimer.

It functions in the pathway secondary metabolite biosynthesis. Its function is as follows. Polyketide transferase; part of the gene cluster that mediates the biosynthesis of gregatin A, a fungal polyketide featuring an alkylated furanone core. The PKS grgA synthesizes C11 and C4 polyketide chains in the presence and absence of the trans-enoyl reductase grgB, respectively. The polyketide transferase grgF is then responsible for the fusion of the two carbon chains to produce the furanone skeleton of gregatin A. GrgF first undergoes a conformational change to an open form, and the active site Cys-115 is acylated by the C11 chain. After the elimination of the phosphopantetheinyl chain, the second polyketide chain of four carbons long is delivered adjacent to the enzyme-bound C11 chain. The catalytic histidine, His-269, deprotonates a proton from C-2 of the long chain, and the resultant carbanion attacks the C-1 carbonyl of the crotonyl group to perform Claisen condensation, by which the phosphopantetheinyl chain is released. Eventually, hydrolysis of the thioester linkage probably by a His-269-activated water molecule completes the reaction to afford the grgF final product. Next, the cytochrome P450 monooxygenase grgG accepts the unstable grgF final product as substrate and performs the oxidative cyclization to furnish the gregatin scaffold and leads to the formation of desmethylgregatin A. Finally, the O-methyltransferase grgD methylates the carboxyl group of desmethylgregatin A to provide gregatin A. This is Polyketide transferase grgF from Penicillium sp.